Consider the following 175-residue polypeptide: Epididymal-specific lipocalin-8 (175 aa).

A signal peptide spans 1–25; sequence MPGAAEALPTVTVTLVAGAVPPASG. Asn66 and Asn74 each carry an N-linked (GlcNAc...) asparagine glycan. An intrachain disulfide couples Cys79 to Cys166.

The protein belongs to the calycin superfamily. Lipocalin family.

It is found in the secreted. In terms of biological role, may play a role in male fertility. May act as a retinoid carrier protein within the epididymis. The polypeptide is Epididymal-specific lipocalin-8 (LCN8) (Homo sapiens (Human)).